The primary structure comprises 931 residues: Netrin receptor UNC5C (931 aa).

The signal sequence occupies residues 1–40; it reads MRKGLRATAARCGLGLGYLLQMLVLPALALLSASGTGSAA. Residues 41 to 380 lie on the Extracellular side of the membrane; the sequence is QDDDFFHELP…APDSDDVALY (340 aa). Positions 62–159 constitute an Ig-like domain; the sequence is PHFLIEPEEA…AGTTKSRKAY (98 aa). Disulfide bonds link Cys-83–Cys-144, Cys-95–Cys-142, Cys-188–Cys-239, Cys-272–Cys-309, Cys-276–Cys-313, Cys-287–Cys-299, Cys-328–Cys-362, Cys-332–Cys-367, and Cys-340–Cys-352. In terms of domain architecture, Ig-like C2-type spans 161–256; sequence RIAYLRKTFE…KRKSTTATVI (96 aa). An N-linked (GlcNAc...) asparagine glycan is attached at Asn-236. TSP type-1 domains lie at 260–314 and 316–368; these read NGGW…TLCP and DGRW…GLCM. Asn-361 is a glycosylation site (N-linked (GlcNAc...) asparagine). Residues 381–401 traverse the membrane as a helical segment; it reads VGIVIAVIVCLAISVVVALFV. Residues 402–931 lie on the Cytoplasmic side of the membrane; it reads YRKNHRDFES…VVSLAAEGQY (530 aa). Residues 402-931 form a required for netrin-mediated axon repulsion of neuronal growth cones region; the sequence is YRKNHRDFES…VVSLAAEGQY (530 aa). Position 502 is a phosphoserine (Ser-502). A ZU5 domain is found at 530-673; sequence CTAFGSFNSL…LSTYALVGHS (144 aa). Tyr-568 is subject to Phosphotyrosine. An interaction with DCC region spans residues 694-712; the sequence is SLEYSIRVYCLDDTQDALK. Residues 850 to 929 enclose the Death domain; sequence QKLCSSLDAP…ETVVSLAAEG (80 aa).

Belongs to the unc-5 family. As to quaternary structure, interacts with DCC (via cytoplasmic domain). Interacts (tyrosine phosphorylated form) with PTPN11. Interacts (via extracellular domain) with FLRT3 (via extracellular domain). Interacts (via Ig-like C2-type domain) with DSCAM (via extracellular domain). Interacts (via death domain) with DAPK1. Interacts (via cytoplasmic domain) with TUBB3; this interaction is decreased by NTN1/Netrin-1. Proteolytically cleaved by caspases during apoptosis. The cleavage does not take place when the receptor is associated with netrin ligand. Its cleavage by caspases is required to induce apoptosis. Post-translationally, phosphorylated on different cytoplasmic tyrosine residues. Phosphorylation of Tyr-568 leads to an interaction with PTPN11 phosphatase, suggesting that its activity is regulated by phosphorylation/dephosphorylation. Tyrosine phosphorylation is netrin-dependent. As to expression, mainly expressed in brain. Expressed in temporal lobe cortical neurons and in neurons of the hippocampal pyramidal layer. Also expressed in kidney. Not expressed in developing or adult lung.

The protein localises to the cell membrane. It is found in the cell surface. It localises to the synapse. The protein resides in the synaptosome. Its subcellular location is the cell projection. The protein localises to the axon. It is found in the dendrite. It localises to the growth cone. The protein resides in the lamellipodium. Its subcellular location is the filopodium. Its function is as follows. Receptor for netrin required for axon guidance. Mediates axon repulsion of neuronal growth cones in the developing nervous system upon ligand binding. NTN1/Netrin-1 binding might cause dissociation of UNC5C from polymerized TUBB3 in microtubules and thereby lead to increased microtubule dynamics and axon repulsion. Axon repulsion in growth cones may also be caused by its association with DCC that may trigger signaling for repulsion. Might also collaborate with DSCAM in NTN1-mediated axon repulsion independently of DCC. Also involved in corticospinal tract axon guidance independently of DCC. Involved in dorsal root ganglion axon projection towards the spinal cord. It also acts as a dependence receptor required for apoptosis induction when not associated with netrin ligand. This Homo sapiens (Human) protein is Netrin receptor UNC5C (UNC5C).